A 367-amino-acid polypeptide reads, in one-letter code: Glutamate 5-kinase (367 aa).

Lysine 10 is a binding site for ATP. Substrate-binding residues include serine 50, aspartate 137, and asparagine 149. Residues 169–170 (TD) and 211–217 (TGGMSTK) contribute to the ATP site. The region spanning 275 to 353 (AGEITVDEGA…QQIDAILGYE (79 aa)) is the PUA domain.

It belongs to the glutamate 5-kinase family.

It localises to the cytoplasm. It carries out the reaction L-glutamate + ATP = L-glutamyl 5-phosphate + ADP. The protein operates within amino-acid biosynthesis; L-proline biosynthesis; L-glutamate 5-semialdehyde from L-glutamate: step 1/2. Catalyzes the transfer of a phosphate group to glutamate to form L-glutamate 5-phosphate. This is Glutamate 5-kinase from Salmonella agona (strain SL483).